The primary structure comprises 180 residues: Shikimate kinase (180 aa).

14 to 19 (GAGKSC) provides a ligand contact to ATP. Ser18 lines the Mg(2+) pocket. Substrate contacts are provided by Asp36, Arg60, and Gly82. An ATP-binding site is contributed by Arg120. Arg139 serves as a coordination point for substrate.

This sequence belongs to the shikimate kinase family. As to quaternary structure, monomer. Mg(2+) serves as cofactor.

Its subcellular location is the cytoplasm. The catalysed reaction is shikimate + ATP = 3-phosphoshikimate + ADP + H(+). It functions in the pathway metabolic intermediate biosynthesis; chorismate biosynthesis; chorismate from D-erythrose 4-phosphate and phosphoenolpyruvate: step 5/7. In terms of biological role, catalyzes the specific phosphorylation of the 3-hydroxyl group of shikimic acid using ATP as a cosubstrate. This is Shikimate kinase from Xanthomonas euvesicatoria pv. vesicatoria (strain 85-10) (Xanthomonas campestris pv. vesicatoria).